Consider the following 508-residue polypeptide: Aldehyde dehydrogenase family 7 member A1 (508 aa).

NAD(+) is bound at residue 244-249 (GSSKVG). Glutamate 266 serves as the catalytic Proton acceptor. Catalysis depends on cysteine 300, which acts as the Nucleophile.

It belongs to the aldehyde dehydrogenase family. As to quaternary structure, homotetramer.

The enzyme catalyses an aldehyde + NAD(+) + H2O = a carboxylate + NADH + 2 H(+). In Pisum sativum (Garden pea), this protein is Aldehyde dehydrogenase family 7 member A1.